Here is a 144-residue protein sequence, read N- to C-terminus: Conopressin-conophysin (144 aa).

Positions 1-27 (MTRSALQMGRLTLVLCLLLQLVLVTQA) are cleaved as a signal peptide. An intrachain disulfide couples cysteine 28 to cysteine 33. Aspartic acid 1-amide is present on aspartate 36. The propeptide occupies 37–44 (GERDVDGR). Cystine bridges form between cysteine 50–cysteine 90, cysteine 53–cysteine 64, cysteine 58–cysteine 80, cysteine 65–cysteine 70, cysteine 97–cysteine 117, cysteine 109–cysteine 129, and cysteine 118–cysteine 123. A propeptide spanning residues 131–144 (KESKSGIRVGCQRS) is cleaved from the precursor.

Belongs to the vasopressin/oxytocin family. In terms of tissue distribution, expressed by the venom duct.

Its subcellular location is the secreted. The sequence is that of Conopressin-conophysin from Conus bayani (Bayan's cone).